The chain runs to 266 residues: Undecaprenyl-diphosphatase (266 aa).

7 consecutive transmembrane segments (helical) span residues 39 to 59, 86 to 106, 112 to 132, 153 to 173, 189 to 209, 216 to 236, and 246 to 266; these read PGSS…VWYF, SIFI…LFVP, VLRS…FMYL, LIGF…GITI, FSFL…FIFS, IGFL…LLAI, and NGLK…LLNL.

This sequence belongs to the UppP family.

Its subcellular location is the cell inner membrane. The catalysed reaction is di-trans,octa-cis-undecaprenyl diphosphate + H2O = di-trans,octa-cis-undecaprenyl phosphate + phosphate + H(+). In terms of biological role, catalyzes the dephosphorylation of undecaprenyl diphosphate (UPP). Confers resistance to bacitracin. This Prochlorococcus marinus (strain MIT 9215) protein is Undecaprenyl-diphosphatase.